Consider the following 263-residue polypeptide: Probable adenylate kinase 7, mitochondrial (263 aa).

Residues 1-30 (MAWLSRVRGVSPVTRLAAIRRSFGSAAALE) constitute a mitochondrion transit peptide. 72 to 77 (GAWRHV) contacts ATP. The NMP stretch occupies residues 92 to 121 (SMGSLVRQELNPRSSLYKEIASAVNERKLV). AMP is bound by residues R98, 119-121 (KLV), 149-152 (GIPR), Q156, and R206. Position 234 (G234) interacts with ATP.

This sequence belongs to the adenylate kinase family. Monomer.

The protein resides in the mitochondrion. The catalysed reaction is AMP + ATP = 2 ADP. In terms of biological role, catalyzes the reversible transfer of the terminal phosphate group between ATP and AMP. Plays an important role in cellular energy homeostasis and in adenine nucleotide metabolism. The sequence is that of Probable adenylate kinase 7, mitochondrial from Arabidopsis thaliana (Mouse-ear cress).